Consider the following 468-residue polypeptide: Citrate synthase, mitochondrial (468 aa).

The transit peptide at 1–30 (MSLISAGRVCARILGAKNSPCALIAARQAS) directs the protein to the mitochondrion. Active-site residues include H303 and H349. R358 provides a ligand contact to oxaloacetate. The active site involves D404. Oxaloacetate contacts are provided by R430 and R450.

It belongs to the citrate synthase family. As to quaternary structure, homodimer.

It is found in the mitochondrion matrix. The catalysed reaction is oxaloacetate + acetyl-CoA + H2O = citrate + CoA + H(+). It functions in the pathway carbohydrate metabolism; tricarboxylic acid cycle; isocitrate from oxaloacetate: step 1/2. Its function is as follows. Key enzyme of the Krebs tricarboxylic acid cycle which catalyzes the synthesis of citrate from acetyl coenzyme A and oxaloacetate. The chain is Citrate synthase, mitochondrial (cs) from Xenopus laevis (African clawed frog).